Reading from the N-terminus, the 271-residue chain is Phosphatidylglycerol--prolipoprotein diacylglyceryl transferase (271 aa).

The next 7 helical transmembrane spans lie at 25–45 (WYGI…KFFV), 60–80 (YFIW…ILIY), 103–123 (FVGI…IATL), 134–154 (WIFL…GRIG), 181–201 (PSQF…VYLA), 209–229 (GELI…CEFY), and 235–255 (GIGF…IMFI). Arg-152 serves as a coordination point for a 1,2-diacyl-sn-glycero-3-phospho-(1'-sn-glycerol).

Belongs to the Lgt family.

The protein resides in the cell inner membrane. It catalyses the reaction L-cysteinyl-[prolipoprotein] + a 1,2-diacyl-sn-glycero-3-phospho-(1'-sn-glycerol) = an S-1,2-diacyl-sn-glyceryl-L-cysteinyl-[prolipoprotein] + sn-glycerol 1-phosphate + H(+). Its pathway is protein modification; lipoprotein biosynthesis (diacylglyceryl transfer). Functionally, catalyzes the transfer of the diacylglyceryl group from phosphatidylglycerol to the sulfhydryl group of the N-terminal cysteine of a prolipoprotein, the first step in the formation of mature lipoproteins. In Campylobacter jejuni subsp. doylei (strain ATCC BAA-1458 / RM4099 / 269.97), this protein is Phosphatidylglycerol--prolipoprotein diacylglyceryl transferase.